Reading from the N-terminus, the 388-residue chain is F-box protein At5g42460 (388 aa).

The region spanning 1-47 is the F-box domain; the sequence is MTIMSDLPRDLLAEILSRVPLTSLRAVRLTCKKWNDLSKDRSFLKKQ.

The protein is F-box protein At5g42460 of Arabidopsis thaliana (Mouse-ear cress).